A 184-amino-acid chain; its full sequence is Photosystem I assembly protein Ycf4 (184 aa).

2 helical membrane passes run 22-42 (FCWA…GIPS) and 64-84 (IVMC…WCTI).

The protein belongs to the Ycf4 family.

The protein localises to the plastid. Its subcellular location is the chloroplast thylakoid membrane. Seems to be required for the assembly of the photosystem I complex. This chain is Photosystem I assembly protein Ycf4, found in Huperzia lucidula (Shining clubmoss).